Consider the following 316-residue polypeptide: MSDSLRIIFAGTPDFAARHLAALLSTQHHIVGVLTPPDKPAGRGKKLTINPVKELALTNNIPVYQPTSLKPEENHEWIKALQPDVMIVVAYGMILPKAVLDIPRLGCLNVHGSLLPKWRGAAPIQRALWAGDTETGVTIMQMDVGLDTGDMLYKASCPITHQDTSASLYAKLAELGPKALINTLDLIISGELKAEKQDDSLANYAEKLSKEEAKINWSLSAQQIERCIRAFNPWPMSFFMLDDQPVKVWEAQVIASDNTNQIPGTLLKADKTGIYIVTGEGILNITKLQPSGKKPMASADFLNSKRDWFTPGKIIQ.

(6S)-5,6,7,8-tetrahydrofolate is bound at residue 113-116 (SLLP).

This sequence belongs to the Fmt family.

The catalysed reaction is L-methionyl-tRNA(fMet) + (6R)-10-formyltetrahydrofolate = N-formyl-L-methionyl-tRNA(fMet) + (6S)-5,6,7,8-tetrahydrofolate + H(+). Attaches a formyl group to the free amino group of methionyl-tRNA(fMet). The formyl group appears to play a dual role in the initiator identity of N-formylmethionyl-tRNA by promoting its recognition by IF2 and preventing the misappropriation of this tRNA by the elongation apparatus. The polypeptide is Methionyl-tRNA formyltransferase (Proteus mirabilis (strain HI4320)).